Reading from the N-terminus, the 201-residue chain is Recombination protein RecR (201 aa).

The C4-type zinc finger occupies 60–75 (CSRCGNVDTVDPCTVC). Residues 83-178 (SIIIVVEDVS…KITRLAHGVP (96 aa)) form the Toprim domain.

The protein belongs to the RecR family.

In terms of biological role, may play a role in DNA repair. It seems to be involved in an RecBC-independent recombinational process of DNA repair. It may act with RecF and RecO. This is Recombination protein RecR from Rhizobium leguminosarum bv. trifolii (strain WSM2304).